A 388-amino-acid polypeptide reads, in one-letter code: GTPase Obg (388 aa).

Residues 1 to 159 (MKFVDEATIR…RSLRLELMLL (159 aa)) enclose the Obg domain. Residues 160 to 333 (ADVGLLGMPN…LALKLLDFID (174 aa)) form the OBG-type G domain. Residues 166–173 (GMPNAGKS), 191–195 (FTTLV), 213–216 (DIPG), 283–286 (NKAD), and 314–316 (SAY) each bind GTP. Positions 173 and 193 each coordinate Mg(2+). Positions 356–377 (QNANESVNEDYDDDLDDDDYDD) are disordered. Over residues 362-377 (VNEDYDDDLDDDDYDD) the composition is skewed to acidic residues.

The protein belongs to the TRAFAC class OBG-HflX-like GTPase superfamily. OBG GTPase family. In terms of assembly, monomer. Mg(2+) is required as a cofactor.

It localises to the cytoplasm. Its function is as follows. An essential GTPase which binds GTP, GDP and possibly (p)ppGpp with moderate affinity, with high nucleotide exchange rates and a fairly low GTP hydrolysis rate. Plays a role in control of the cell cycle, stress response, ribosome biogenesis and in those bacteria that undergo differentiation, in morphogenesis control. The chain is GTPase Obg from Shewanella piezotolerans (strain WP3 / JCM 13877).